A 660-amino-acid chain; its full sequence is MNINLDSAKDTFCKNVLIYGYCKYENKGCAFSHTVKPTSSVPGSQGSNATTNSSGNTNADMKKKFNFNTPSFQPSTVPNLTNKFSNLSPNLKEIPVFVPSGGMSNADSGGMNEPEMNDSVTPNKKFNASTPSFMPSNPYISNNDQISAPSPVMAQSVSTPGAKANGNIQHNPYLPGNAGTPQPTSAVAAPNSADVFFQQPTSSYPLQHHLYAPAPPPRLTIPLPPHEINVNSMFIPNDLRETLLKRNEATLQTLPRSNLPDHVNIYHSLVPIDTSFENISKVYELPSFVYKVFSNVDGNPYALRKIDIQSVLRITNELPFKYIKKWKSVKCANIVQLQEAFTSMAFGGSYSSLIVTYDYFPNSNTLQEQHISRRLGGKLEPITEELLWNYVIEITNALINIHENNLAARSALHLSKILVTNKNRVRLGGVGISDILNYEDDEEQIQQKGLDAFRHELQQADIKKFGKLILDLAALCLPNNARNHEPKDLISLLKTSTTVNFSGEFINLLTELNMNTSDLQEFNRNHLSRRILNFCSNAQDSQDFMESQLSTELENARVFRLITKLNFIIDRPEYDNDPNWQENGNKYIIKLFRDYIFFQYDEFGKPVCDLSRVLTNLNKLDAGIDEKFLLVNKDEKNCIIVSYKEIRDIIDSAFRTLTRG.

The C3H1-type zinc finger occupies 7–36; it reads SAKDTFCKNVLIYGYCKYENKGCAFSHTVK. Disordered stretches follow at residues 36–60 and 150–186; these read KPTS…TNAD and SPVM…PTSA. The segment covering 43 to 59 has biased composition (low complexity); sequence GSQGSNATTNSSGNTNA. The PABPC-interacting motif-2 (PAM-2) signature appears at 59–79; the sequence is ADMKKKFNFNTPSFQPSTVPN. The span at 150-159 shows a compositional bias: polar residues; that stretch reads SPVMAQSVST. The segment at 252-528 is pseudokinase domain; that stretch reads QTLPRSNLPD…LQEFNRNHLS (277 aa). ATP is bound by residues arginine 304, 358-365, and 415-416; these read DYFPNSNT and SK. Residues 529 to 567 adopt a coiled-coil conformation; sequence RRILNFCSNAQDSQDFMESQLSTELENARVFRLITKLNF. The knob domain stretch occupies residues 568–660; it reads IIDRPEYDND…DSAFRTLTRG (93 aa).

This sequence belongs to the protein kinase superfamily. PAN3 family. Homodimer. Forms a heterotrimer with a catalytic subunit PAN2 to form the poly(A)-nuclease (PAN) deadenylation complex. Interacts (via PAM-2 motif) with poly(A)-binding protein PAB1 (via PABC domain), conferring substrate specificity of the enzyme complex.

The protein localises to the cytoplasm. Functionally, regulatory subunit of the poly(A)-nuclease (PAN) deadenylation complex, one of two cytoplasmic mRNA deadenylases involved in mRNA turnover. PAN specifically shortens poly(A) tails of RNA and the activity is stimulated by poly(A)-binding protein PAB1. PAN deadenylation is followed by rapid degradation of the shortened mRNA tails by the CCR4-NOT complex. Deadenylated mRNAs are then degraded by two alternative mechanisms, namely exosome-mediated 3'-5' exonucleolytic degradation, or deadenylation-dependent mRNA decaping and subsequent 5'-3' exonucleolytic degradation by XRN1. May also be involved in post-transcriptional maturation of mRNA poly(A) tails. PAN3 acts as a positive regulator for PAN activity, recruiting the catalytic subunit PAN2 to mRNA via its interaction with RNA and with PAB1. This chain is PAN2-PAN3 deadenylation complex subunit PAN3, found in Debaryomyces hansenii (strain ATCC 36239 / CBS 767 / BCRC 21394 / JCM 1990 / NBRC 0083 / IGC 2968) (Yeast).